The sequence spans 107 residues: MTTLLAYALAALAEIAGCFAIWAWLRLGRSPLWLGPGLASLILFAVLLTRVESAAAGRAYAAYGGVYVAASLLWLWAAEGQRPDRWDLGGAALCLAGSAVVLLGPRG.

The next 4 helical transmembrane spans lie at 4 to 24 (LLAYALAALAEIAGCFAIWAW), 31 to 51 (PLWLGPGLASLILFAVLLTRV), 59 to 79 (AYAAYGGVYVAASLLWLWAAE), and 85 to 105 (RWDLGGAALCLAGSAVVLLGP).

Belongs to the UPF0060 family.

Its subcellular location is the cell inner membrane. The protein is UPF0060 membrane protein M446_5886 of Methylobacterium sp. (strain 4-46).